The primary structure comprises 481 residues: Probable myosin light chain kinase DDB_G0284661 (481 aa).

Residues 13–269 (YNITDIIGEG…VKQSLAHKWI (257 aa)) enclose the Protein kinase domain. Residues 19-27 (IGEGTFSTV) and K43 each bind ATP. The active-site Proton acceptor is the D136. Disordered stretches follow at residues 285–315 (PLITSQQQQQQSPSSLLSSSSSSTASSPSLK) and 345–427 (SNSH…DDDE). A compositionally biased stretch (low complexity) spans 379–421 (SNNNINNNNDNNDNNNSNSNNSNNNINNFINNNNNNNNNNSNF).

Belongs to the protein kinase superfamily. CAMK Ser/Thr protein kinase family. CaMK subfamily.

The enzyme catalyses L-seryl-[myosin light chain] + ATP = O-phospho-L-seryl-[myosin light chain] + ADP + H(+). It carries out the reaction L-threonyl-[myosin light chain] + ATP = O-phospho-L-threonyl-[myosin light chain] + ADP + H(+). With respect to regulation, does not have a calmodulin-binding domain. May phosphorylate a specific serine in the N-terminus of a myosin light chain. This is Probable myosin light chain kinase DDB_G0284661 from Dictyostelium discoideum (Social amoeba).